The chain runs to 170 residues: MDEVLIGEVIKPHGVQGEIKVYPITDNPKRFRKLKEVILVQNQEQRRLKVLHANVHQSEVYLTLEGINTRDKAEAIRGWAVKADRDQVPPLKEGWYYFELEGMQVYEGDVLLGTLAQVIQTGANDVYLVKGDKGEICVPALKTVVKHVDVAGKRMDVELPPGLIDGEELR.

One can recognise a PRC barrel domain in the interval 92–163; the sequence is KEGWYYFELE…RMDVELPPGL (72 aa).

Belongs to the RimM family. As to quaternary structure, binds ribosomal protein uS19.

It localises to the cytoplasm. An accessory protein needed during the final step in the assembly of 30S ribosomal subunit, possibly for assembly of the head region. Essential for efficient processing of 16S rRNA. May be needed both before and after RbfA during the maturation of 16S rRNA. It has affinity for free ribosomal 30S subunits but not for 70S ribosomes. This chain is Ribosome maturation factor RimM, found in Desulfitobacterium hafniense (strain Y51).